Consider the following 222-residue polypeptide: Ribosomal RNA small subunit methyltransferase I (222 aa).

The protein belongs to the methyltransferase superfamily. RsmI family.

Its subcellular location is the cytoplasm. It carries out the reaction cytidine(1402) in 16S rRNA + S-adenosyl-L-methionine = 2'-O-methylcytidine(1402) in 16S rRNA + S-adenosyl-L-homocysteine + H(+). In terms of biological role, catalyzes the 2'-O-methylation of the ribose of cytidine 1402 (C1402) in 16S rRNA. The protein is Ribosomal RNA small subunit methyltransferase I of Thermotoga maritima (strain ATCC 43589 / DSM 3109 / JCM 10099 / NBRC 100826 / MSB8).